The following is a 332-amino-acid chain: DNA-directed RNA polymerase subunit alpha (332 aa).

The interval 1 to 234 is alpha N-terminal domain (alpha-NTD); the sequence is MTVTANQVLR…DQLSVFGDFT (234 aa). The interval 248–332 is alpha C-terminal domain (alpha-CTD); that stretch reads VDPVLLRPID…AGVASHGMLG (85 aa).

The protein belongs to the RNA polymerase alpha chain family. Homodimer. The RNAP catalytic core consists of 2 alpha, 1 beta, 1 beta' and 1 omega subunit. When a sigma factor is associated with the core the holoenzyme is formed, which can initiate transcription.

The catalysed reaction is RNA(n) + a ribonucleoside 5'-triphosphate = RNA(n+1) + diphosphate. DNA-dependent RNA polymerase catalyzes the transcription of DNA into RNA using the four ribonucleoside triphosphates as substrates. The chain is DNA-directed RNA polymerase subunit alpha from Stenotrophomonas maltophilia (strain K279a).